We begin with the raw amino-acid sequence, 509 residues long: uncharacterized protein (509 aa).

The protein belongs to the MG032/MG096/MG288 family.

This is an uncharacterized protein from Mycoplasma pneumoniae (strain ATCC 29342 / M129 / Subtype 1) (Mycoplasmoides pneumoniae).